Reading from the N-terminus, the 167-residue chain is Modulator of smoothened protein (167 aa).

A run of 4 helical transmembrane segments spans residues 7-29, 68-88, 101-121, and 139-159; these read ISGC…PDWI, TLFF…LLVI, WIAF…PVGF, and VGSS…GLLF.

The protein resides in the cell projection. The protein localises to the cilium membrane. Its subcellular location is the cell membrane. Its function is as follows. Acts as a negative regulator of hedgehog signaling probably by promoting internalization and subsequent degradation of smoothened protein (SMO) present in the ciliary membrane. Plays a role in sonic hedgehog (SHH)-induced spinal neural progenitor cells differentiation. The chain is Modulator of smoothened protein from Danio rerio (Zebrafish).